A 336-amino-acid chain; its full sequence is Cytosolic 5'-nucleotidase 3A (336 aa).

Catalysis depends on Asp88, which acts as the Nucleophile. The Mg(2+) site is built by Asp88 and Asp90. The active-site Proton donor is Asp90. Residue Glu135 participates in CMP binding. The N(7)-methyl-GMP site is built by Glu135 and Ser156. Substrate-binding positions include 203–204 and Lys252; that span reads SA. Asp277 contributes to the Mg(2+) binding site. The residue at position 278 (Ser278) is a Phosphoserine.

This sequence belongs to the pyrimidine 5'-nucleotidase family. As to quaternary structure, monomer. Isoforms 1, 3 and 4 are expressed in reticulocytes. Isoform 4 is hardly detectable in bone marrow and fetal liver.

Its subcellular location is the cytoplasm. The protein resides in the endoplasmic reticulum. It carries out the reaction N(7)-methyl-GMP + H2O = N(7)-methylguanosine + phosphate. The catalysed reaction is CMP + H2O = cytidine + phosphate. The enzyme catalyses a ribonucleoside 5'-phosphate + H2O = a ribonucleoside + phosphate. Its function is as follows. Nucleotidase which shows specific activity towards cytidine monophosphate (CMP) and 7-methylguanosine monophosphate (m(7)GMP). CMP seems to be the preferred substrate. The protein is Cytosolic 5'-nucleotidase 3A (NT5C3A) of Homo sapiens (Human).